The primary structure comprises 176 residues: Sec-independent protein translocase protein TatB (176 aa).

Residues 1–21 (MLDLGLSKMALIGVVALVVLG) traverse the membrane as a helical segment. The tract at residues 155 to 176 (QSGAARVARHQPASLRRPTRFL) is disordered.

It belongs to the TatB family. As to quaternary structure, the Tat system comprises two distinct complexes: a TatABC complex, containing multiple copies of TatA, TatB and TatC subunits, and a separate TatA complex, containing only TatA subunits. Substrates initially bind to the TatABC complex, which probably triggers association of the separate TatA complex to form the active translocon.

It is found in the cell inner membrane. Functionally, part of the twin-arginine translocation (Tat) system that transports large folded proteins containing a characteristic twin-arginine motif in their signal peptide across membranes. Together with TatC, TatB is part of a receptor directly interacting with Tat signal peptides. TatB may form an oligomeric binding site that transiently accommodates folded Tat precursor proteins before their translocation. This is Sec-independent protein translocase protein TatB from Burkholderia ambifaria (strain ATCC BAA-244 / DSM 16087 / CCUG 44356 / LMG 19182 / AMMD) (Burkholderia cepacia (strain AMMD)).